We begin with the raw amino-acid sequence, 93 residues long: Alpha-defensin 3 (93 aa).

Positions 1 to 16 (MKTLVLLSALVLLAFQ) are cleaved as a signal peptide. A propeptide spanning residues 17–58 (VQADPIQNTDEETKTEEQPGEDDQAVSVSFGDPEGSSLQEES) is cleaved from the precursor. Residues 22-56 (IQNTDEETKTEEQPGEDDQAVSVSFGDPEGSSLQE) are disordered. 3 disulfide bridges follow: C64–C92, C66–C81, and C71–C91.

This sequence belongs to the alpha-defensin family. In terms of tissue distribution, paneth cells of the small bowel.

Its subcellular location is the secreted. Its function is as follows. Probably contributes to the antimicrobial barrier function of the small bowel mucosa. The chain is Alpha-defensin 3 (Defa3) from Mus musculus (Mouse).